The chain runs to 282 residues: Putative 4-diphosphocytidyl-2-C-methyl-D-erythritol kinase (282 aa).

Residue Lys9 is part of the active site. 93–103 (PVSAGLAGGSA) provides a ligand contact to ATP. Residue Asp135 is part of the active site.

It belongs to the GHMP kinase family. IspE subfamily.

The enzyme catalyses 4-CDP-2-C-methyl-D-erythritol + ATP = 4-CDP-2-C-methyl-D-erythritol 2-phosphate + ADP + H(+). Its function is as follows. Catalyzes the phosphorylation of the position 2 hydroxy group of 4-diphosphocytidyl-2C-methyl-D-erythritol. This is Putative 4-diphosphocytidyl-2-C-methyl-D-erythritol kinase from Staphylococcus aureus (strain MSSA476).